The sequence spans 519 residues: Major facilitator superfamily domain-containing protein 8 (519 aa).

A disordered region spans residues 1–25; the sequence is MANLGSEAEREPLLGPGSPGSREWS. Residues 1–41 are Cytoplasmic-facing; it reads MANLGSEAEREPLLGPGSPGSREWSEIETQEHYKSRWKSVR. Residues 13 to 14 carry the Dileucine internalization motif motif; the sequence is LL. The chain crosses the membrane as a helical span at residues 42–62; sequence ILYLTMFLSSVGFSIVIMSIW. Topologically, residues 63 to 75 are extracellular; that stretch reads PYLQKIDQTADAS. The helical transmembrane segment at 76–96 threads the bilayer; it reads FLGWVIASYSLGQMVASPLFG. At 97–106 the chain is on the cytoplasmic side; the sequence is LWSNYRPRKE. A helical transmembrane segment spans residues 107-127; sequence PLIVSISISVAANCLYAYVHV. The Extracellular segment spans residues 128–140; it reads PAAHNKYYMLIAR. A helical transmembrane segment spans residues 141–161; it reads GLVGFGAGNVAVVRSYIAGAT. Topologically, residues 162–174 are cytoplasmic; sequence SLQERTNAMANTS. A helical transmembrane segment spans residues 175–195; it reads TCQALGFILGPVFQTCFALIG. Residues 196–212 are Extracellular-facing; that stretch reads EKGVTWDIIKLQVNMYT. Residues 213–233 traverse the membrane as a helical segment; it reads APVLLAAFLGILNIILILFIL. At 234–267 the chain is on the cytoplasmic side; that stretch reads REHRVDDLGRQCKSVNFQEENTDEPQIPEGSIDQ. Residues 268 to 288 form a helical membrane-spanning segment; that stretch reads VAVVATNIVFFVVLFIFAVYE. The Extracellular segment spans residues 289 to 310; that stretch reads TILTPLTLDMYAWTQEQAVLYD. A helical membrane pass occupies residues 311-331; it reads GILLVAFGVEAVLVFMGVKLL. Over 332–338 the chain is Cytoplasmic; it reads SKKIGER. Residues 339–359 form a helical membrane-spanning segment; sequence AILLGGFVVVWVGFFILLPWG. The Extracellular portion of the chain corresponds to 360 to 416; the sequence is NQFPKIQWEDLHNSSTPNTTFGEIIIGLWNSSREDHSEQPTGCPIEQTWCLYTPVIH. Residues asparagine 372 and asparagine 377 are each glycosylated (N-linked (GlcNAc...) asparagine). Residues 417 to 439 form a helical membrane-spanning segment; sequence LAQFLTAAVLIGTGYPACSVMSY. The Cytoplasmic portion of the chain corresponds to 440–452; the sequence is TLYSKVLGPKPQG. A helical membrane pass occupies residues 453 to 473; that stretch reads IYMGWLTTSGSAARILGPVFI. Over 474–483 the chain is Extracellular; it reads SHVYTYLGPR. Residues 484–504 form a helical membrane-spanning segment; it reads WAFSLVCGIVVLTILLIGAVY. Residues 505-519 are Cytoplasmic-facing; it reads KRLVAFSVRYMRIQE.

This sequence belongs to the major facilitator superfamily.

The protein localises to the endosome membrane. The protein resides in the lysosome membrane. It carries out the reaction chloride(in) = chloride(out). It catalyses the reaction iodide(out) = iodide(in). The catalysed reaction is fluoride(in) = fluoride(out). Functionally, outward-rectifying chloride channel involved in endolysosomal chloride homeostasis, membrane fusion and function. Conducts chloride currents up to hundreds of picoamperes. Regulates lysosomal calcium content by reducing the lysosomal membrane potential, thereby activating TRPML1 channel and further release of lysosomal calcium ions. Regulates the pH in endolysosomal compartments and may contribute to progressive acidification from endosome to lysosome. Permeable to other halides such as iodide and fluoride ions. In Mus musculus (Mouse), this protein is Major facilitator superfamily domain-containing protein 8.